The chain runs to 185 residues: Pre-histone-like nucleoprotein (185 aa).

N-acetylserine; by host is present on S2. The propeptide occupies 2 to 23; sequence SILISPDNNTGWGLCSAGMYGG. T55 carries the post-translational modification Phosphothreonine; by host. S172 carries the post-translational modification Phosphoserine; by host. A Nuclear localization signal motif is present at residues 175–185; that stretch reads RVPVRSRPPRS.

Belongs to the adenoviridae histone-like nucleoprotein family. As to quaternary structure, interacts with the core-capsid bridging protein; this interaction bridges the virus core to the capsid. Interacts with host NPM1; this interaction might play a role in placing the pre-histone-like nucleoprotein on the viral DNA or regulating viral gene expression. Interacts with host HMGB1; this interaction inhibits host immune response. In terms of processing, cleaved near the N-terminus by the viral protease during virion maturation to form the mature protein.

The protein localises to the virion. It is found in the host nucleus. The protein resides in the host nucleolus. Its function is as follows. Plays a role in the inhibition of host immune response within the nucleus. Interacts with cellular nucleosomes and immobilizes the host immune danger signal HMGB1 on chromatin. In turn, prevents HMGB1 release out of the cell and thus decreases inflammation. Also plays a role in the wrapping and condensation of the viral DNA. May also promote viral genome import into the nucleus. This Human adenovirus F serotype 40 (HAdV-40) protein is Pre-histone-like nucleoprotein.